The primary structure comprises 482 residues: L-propargylglycine--L-glutamate ligase (482 aa).

The enzyme catalyses L-propargylglycine + L-glutamate + ATP = L-gamma-glutamyl-L-propargylglycine + ADP + phosphate + H(+). The protein operates within amino-acid metabolism. It functions in the pathway antibiotic biosynthesis. Involved in the biosynthesis of terminal alkyne-containing amino acids such as L-beta-ethynylserine, that are produced as antibiotics by S.cattleya. Catalyzes the ATP-dependent ligation of L-propargylglycine to L-glutamate to form the dipeptide L-gamma-glutamyl-L-propargylglycine. Is selective for L-propargylglycine over norvaline, allylglycine and the standard proteinogenic amino acids, except L-cysteine which can be used as a substrate to a lesser extent. This Streptantibioticus cattleyicolor (strain ATCC 35852 / DSM 46488 / JCM 4925 / NBRC 14057 / NRRL 8057) (Streptomyces cattleya) protein is L-propargylglycine--L-glutamate ligase.